The chain runs to 460 residues: Protein unc-93 homolog A (460 aa).

5 consecutive transmembrane segments (helical) span residues Ile7–Leu27, Ser41–Ile61, Trp68–Ser88, Trp89–Ala109, and Leu139–Phe159. N-linked (GlcNAc...) asparagine glycans are attached at residues Asn168 and Asn189. A run of 6 helical transmembrane segments spans residues Thr203–Leu223, Phe292–Gly312, Ile321–Trp341, Pro345–Trp365, Leu390–Val410, and Leu412–Leu432.

The protein belongs to the unc-93 family.

It is found in the membrane. This is Protein unc-93 homolog A (unc93a) from Xenopus laevis (African clawed frog).